Here is a 91-residue protein sequence, read N- to C-terminus: Cell division topological specificity factor (91 aa).

It belongs to the MinE family.

In terms of biological role, prevents the cell division inhibition by proteins MinC and MinD at internal division sites while permitting inhibition at polar sites. This ensures cell division at the proper site by restricting the formation of a division septum at the midpoint of the long axis of the cell. This Gloeobacter violaceus (strain ATCC 29082 / PCC 7421) protein is Cell division topological specificity factor.